The primary structure comprises 75 residues: Exodeoxyribonuclease 7 small subunit (75 aa).

The protein belongs to the XseB family. In terms of assembly, heterooligomer composed of large and small subunits.

It is found in the cytoplasm. It carries out the reaction Exonucleolytic cleavage in either 5'- to 3'- or 3'- to 5'-direction to yield nucleoside 5'-phosphates.. Bidirectionally degrades single-stranded DNA into large acid-insoluble oligonucleotides, which are then degraded further into small acid-soluble oligonucleotides. The sequence is that of Exodeoxyribonuclease 7 small subunit from Caldanaerobacter subterraneus subsp. tengcongensis (strain DSM 15242 / JCM 11007 / NBRC 100824 / MB4) (Thermoanaerobacter tengcongensis).